The primary structure comprises 256 residues: Small ribosomal subunit protein uS2 (256 aa).

The protein belongs to the universal ribosomal protein uS2 family.

The protein is Small ribosomal subunit protein uS2 of Geotalea uraniireducens (strain Rf4) (Geobacter uraniireducens).